The primary structure comprises 457 residues: Multidrug resistance protein MdtK (457 aa).

Helical transmembrane passes span 11–31 (LLAL…MGFV), 53–73 (IWLP…PVIA), 93–113 (WLAG…GYII), 127–147 (AVGY…FQVA), 160–180 (GMVM…IFIY), 188–208 (LGGI…FIAM), 243–263 (LPIA…ALLV), 276–296 (IALN…AAVT), 314–334 (AART…IFTV), 350–370 (VVAL…SDSI), 387–407 (IFFI…YILA), and 418–438 (PAGF…LMML).

Belongs to the multi antimicrobial extrusion (MATE) (TC 2.A.66.1) family. MdtK subfamily.

It is found in the cell inner membrane. In terms of biological role, multidrug efflux pump that functions probably as a Na(+)/drug antiporter. This is Multidrug resistance protein MdtK from Salmonella agona (strain SL483).